A 378-amino-acid chain; its full sequence is Lipid-A-disaccharide synthase (378 aa).

This sequence belongs to the LpxB family.

The catalysed reaction is a lipid X + a UDP-2-N,3-O-bis[(3R)-3-hydroxyacyl]-alpha-D-glucosamine = a lipid A disaccharide + UDP + H(+). It participates in bacterial outer membrane biogenesis; LPS lipid A biosynthesis. Functionally, condensation of UDP-2,3-diacylglucosamine and 2,3-diacylglucosamine-1-phosphate to form lipid A disaccharide, a precursor of lipid A, a phosphorylated glycolipid that anchors the lipopolysaccharide to the outer membrane of the cell. The polypeptide is Lipid-A-disaccharide synthase (Pseudomonas paraeruginosa (strain DSM 24068 / PA7) (Pseudomonas aeruginosa (strain PA7))).